Reading from the N-terminus, the 221-residue chain is MKPPMDLDSLLTQTPAKDNAALERVLAAARGELALRRPVRRWRTQAVGLMAASAGLGLLAAVVLLAVGAVTGPLLLARAPLLAMLVGTSAVCAWGALSPKGRWMRRLGVGLAVVSAAALVLARGAPHSPPSFPGWVCTVSHLAIGVVPLVVALFALRGAFFQPLRAVVAGLSVGSTGALLGELACEQDWRHVLSHHLLAWVVITVVLVVISKSLKPRSYAP.

Helical transmembrane passes span 56 to 76 (LGLL…PLLL), 79 to 99 (APLL…ALSP), 107 to 127 (LGVG…GAPH), 136 to 156 (VCTV…LFAL), 166 to 186 (AVVA…LACE), and 191 to 211 (HVLS…VVIS).

Its subcellular location is the cell inner membrane. Functionally, negative regulator of the carotenoid synthesis regulon. It is probably inactivated by protoporphyrin IX in the presence of blue light. Inactivation of CarR leads to loss of negative control over the carotenogenesis protein CarQ. This is Carotenogenesis protein CarR (carR) from Myxococcus xanthus.